Here is a 567-residue protein sequence, read N- to C-terminus: TGF-beta receptor type-2 (567 aa).

Residues 1–23 form the signal peptide; it reads MGRGLLRGLWPLHIVLWTRIAST. At 24–166 the chain is on the extracellular side; it reads IPPHVPKSVN…SPDLLLVIIQ (143 aa). Cystine bridges form between cysteine 51–cysteine 84, cysteine 54–cysteine 71, cysteine 61–cysteine 67, cysteine 77–cysteine 101, cysteine 121–cysteine 136, and cysteine 138–cysteine 143. Asparagine 70 and asparagine 94 each carry an N-linked (GlcNAc...) asparagine glycan. Residues 167 to 187 form a helical membrane-spanning segment; sequence VTGVSLLPPLGIAIAVIAIFY. Residues 188 to 567 are Cytoplasmic-facing; that stretch reads CYRVHRQQKL…PEDGSLNTTK (380 aa). A Protein kinase domain is found at 244 to 546; sequence IELDTLVGKG…RFSELEHPDR (303 aa). ATP-binding positions include 250 to 258 and lysine 277; that span reads VGKGRFAEV. The active-site Proton acceptor is the aspartate 379. Phosphoserine occurs at positions 409, 548, and 553. The interval 546-567 is disordered; that stretch reads RLSGRSCSQEKIPEDGSLNTTK.

It belongs to the protein kinase superfamily. TKL Ser/Thr protein kinase family. TGFB receptor subfamily. In terms of assembly, homodimer. Heterohexamer; TGFB1, TGFB2 and TGFB3 homodimeric ligands assemble a functional receptor composed of two TGFBR1 and TGFBR2 heterodimers to form a ligand-receptor heterohexamer. The respective affinity of TGFRB1 and TGFRB2 for the ligands may modulate the kinetics of assembly of the receptor and may explain the different biological activities of TGFB1, TGFB2 and TGFB3. Component of a complex composed of TSC22D1 (via N-terminus), TGFBR1 and TGFBR2; the interaction between TSC22D1 and TGFBR1 is inhibited by SMAD7 and promoted by TGFB1. Interacts with DAXX. Interacts with DYNLT4. Interacts with ZFYVE9; ZFYVE9 recruits SMAD2 and SMAD3 to the TGF-beta receptor. Interacts with and is activated by SCUBE3; this interaction does not affect TGFB1-binding to TGFBR2. Interacts with VPS39; this interaction is independent of the receptor kinase activity and of the presence of TGF-beta. Interacts with CLU. Requires Mg(2+) as cofactor. Mn(2+) is required as a cofactor. In terms of processing, phosphorylated on a Ser/Thr residue in the cytoplasmic domain.

The protein localises to the cell membrane. It localises to the membrane raft. The catalysed reaction is L-threonyl-[receptor-protein] + ATP = O-phospho-L-threonyl-[receptor-protein] + ADP + H(+). It carries out the reaction L-seryl-[receptor-protein] + ATP = O-phospho-L-seryl-[receptor-protein] + ADP + H(+). Functionally, transmembrane serine/threonine kinase forming with the TGF-beta type I serine/threonine kinase receptor, TGFBR1, the non-promiscuous receptor for the TGF-beta cytokines TGFB1, TGFB2 and TGFB3. Transduces the TGFB1, TGFB2 and TGFB3 signal from the cell surface to the cytoplasm and is thus regulating a plethora of physiological and pathological processes including cell cycle arrest in epithelial and hematopoietic cells, control of mesenchymal cell proliferation and differentiation, wound healing, extracellular matrix production, immunosuppression and carcinogenesis. The formation of the receptor complex composed of 2 TGFBR1 and 2 TGFBR2 molecules symmetrically bound to the cytokine dimer results in the phosphorylation and the activation of TGFRB1 by the constitutively active TGFBR2. Activated TGFBR1 phosphorylates SMAD2 which dissociates from the receptor and interacts with SMAD4. The SMAD2-SMAD4 complex is subsequently translocated to the nucleus where it modulates the transcription of the TGF-beta-regulated genes. This constitutes the canonical SMAD-dependent TGF-beta signaling cascade. Also involved in non-canonical, SMAD-independent TGF-beta signaling pathways. The polypeptide is TGF-beta receptor type-2 (Tgfbr2) (Rattus norvegicus (Rat)).